We begin with the raw amino-acid sequence, 283 residues long: Release factor glutamine methyltransferase (283 aa).

Residues 120-124 (GTGSG), D143, F172, and N187 each bind S-adenosyl-L-methionine. 187 to 190 (NPPY) provides a ligand contact to substrate.

This sequence belongs to the protein N5-glutamine methyltransferase family. PrmC subfamily.

It carries out the reaction L-glutaminyl-[peptide chain release factor] + S-adenosyl-L-methionine = N(5)-methyl-L-glutaminyl-[peptide chain release factor] + S-adenosyl-L-homocysteine + H(+). Functionally, methylates the class 1 translation termination release factors RF1/PrfA and RF2/PrfB on the glutamine residue of the universally conserved GGQ motif. In Moorella thermoacetica (strain ATCC 39073 / JCM 9320), this protein is Release factor glutamine methyltransferase.